Reading from the N-terminus, the 137-residue chain is Large ribosomal subunit protein uL16c (137 aa).

The segment at methionine 1–alanine 21 is disordered.

It belongs to the universal ribosomal protein uL16 family. Part of the 50S ribosomal subunit.

The protein resides in the plastid. The protein localises to the chloroplast. The sequence is that of Large ribosomal subunit protein uL16c from Tupiella akineta (Green alga).